Here is a 303-residue protein sequence, read N- to C-terminus: Acetaldehyde dehydrogenase 2 (303 aa).

Cys-130 (acyl-thioester intermediate) is an active-site residue. NAD(+) contacts are provided by residues 161–169 (SVGPGTRKN) and Asn-272.

It belongs to the acetaldehyde dehydrogenase family.

It catalyses the reaction acetaldehyde + NAD(+) + CoA = acetyl-CoA + NADH + H(+). The polypeptide is Acetaldehyde dehydrogenase 2 (Burkholderia vietnamiensis (strain G4 / LMG 22486) (Burkholderia cepacia (strain R1808))).